We begin with the raw amino-acid sequence, 128 residues long: 14 kDa zinc-binding protein (128 aa).

Residues 18 to 128 (IFDKIIKKEI…GGRQMNWPPG (111 aa)) enclose the HIT domain. The Histidine triad motif motif lies at 112-116 (HIHVH).

In terms of assembly, homodimer.

The chain is 14 kDa zinc-binding protein (ZBP14) from Zea mays (Maize).